A 789-amino-acid chain; its full sequence is Cadherin-10 (789 aa).

The N-terminal stretch at 1-22 is a signal peptide; the sequence is MTIQQVLLLLLLWMWLLHPCRT. A propeptide spanning residues 23–54 is cleaved from the precursor; it reads EMLFRRTPDLRPKGFVGRTSGSDGKALHRQKR. 5 consecutive Cadherin domains span residues 55 to 160, 161 to 269, 270 to 384, 385 to 487, and 488 to 606; these read GWMW…EPTF, PEEI…PPRF, PQST…PPVF, SRSS…DNAP, and QFAV…LLLP. The Extracellular segment spans residues 55 to 606; sequence GWMWNQFFLL…SCNAEALLLP (552 aa). A glycan (N-linked (GlcNAc...) asparagine) is linked at Asn256. Residues Asn438, Asn456, and Asn534 are each glycosylated (N-linked (GlcNAc...) asparagine). The chain crosses the membrane as a helical span at residues 607-634; sequence AGLSTGALIAILLCIIILLVIVVLFAAL. The Cytoplasmic portion of the chain corresponds to 635–789; the sequence is KRQRKKEPLI…GGGESDKDAS (155 aa).

The protein resides in the cell membrane. Functionally, cadherins are calcium-dependent cell adhesion proteins. They preferentially interact with themselves in a homophilic manner in connecting cells; cadherins may thus contribute to the sorting of heterogeneous cell types. The protein is Cadherin-10 (CDH10) of Gallus gallus (Chicken).